Reading from the N-terminus, the 178-residue chain is Endoribonuclease YbeY (178 aa).

Positions 118, 122, and 128 each coordinate Zn(2+).

Belongs to the endoribonuclease YbeY family. The cofactor is Zn(2+).

Its subcellular location is the cytoplasm. Functionally, single strand-specific metallo-endoribonuclease involved in late-stage 70S ribosome quality control and in maturation of the 3' terminus of the 16S rRNA. In Mycolicibacterium gilvum (strain PYR-GCK) (Mycobacterium gilvum (strain PYR-GCK)), this protein is Endoribonuclease YbeY.